The following is a 152-amino-acid chain: UPF0266 membrane protein YobD (152 aa).

A run of 3 helical transmembrane segments spans residues 6–26 (LVLI…QFIM), 45–65 (IDSV…VTNH), and 67–87 (ALIT…IFWI).

This sequence belongs to the UPF0266 family.

It is found in the cell inner membrane. This Escherichia coli O157:H7 (strain EC4115 / EHEC) protein is UPF0266 membrane protein YobD.